We begin with the raw amino-acid sequence, 310 residues long: Junctional adhesion molecule C (310 aa).

The signal sequence occupies residues 1–31 (MALRRPPRLRLCARLPDFFLLLLFRGCLIGA). At 32–241 (VNLKSSNRTP…EQEMEVYDLN (210 aa)) the chain is on the extracellular side. One can recognise an Ig-like V-type domain in the interval 35 to 127 (KSSNRTPVVQ…VARNDRKEID (93 aa)). Intrachain disulfides connect cysteine 53-cysteine 115 and cysteine 160-cysteine 219. N-linked (GlcNAc...) asparagine glycans are attached at residues asparagine 104 and asparagine 192. The region spanning 139 to 236 (PVTPVCRVPK…SARCEEQEME (98 aa)) is the Ig-like C2-type domain. Residues 242-262 (IGGIIGGVLVVLAVLALITLG) form a helical membrane-spanning segment. Residues 263–310 (ICCAYRRGYFINNKQDGESYKNPGKPDGVNYIRTDEEGDFRHKSSFVI) are Cytoplasmic-facing. Residues cysteine 264 and cysteine 265 are each lipidated (S-palmitoyl cysteine).

Belongs to the immunoglobulin superfamily. In terms of assembly, interacts with ITGAM. Interacts with GORASP2. Proteolytically cleaved from endothelial cells surface into a soluble form by ADAM10 and ADAM17; the release of soluble JAM3 is increased by pro-inflammatory factors. In terms of processing, S-palmitoylated by ZDHHC7. S-palmitoylation promotes expression at tight junctions. As to expression, detected on round and elongated spermatids (at protein level). Highest expression in placenta, brain and kidney. Significant expression is detected on platelets. Expressed in intestinal mucosa cells. Expressed in the vascular endothelium. Found in serum (at protein level). Also detected in the synovial fluid of patients with rheumatoid arthritis, psoriatic arthritis or ostearthritis (at protein level).

Its subcellular location is the cell membrane. It is found in the cell junction. The protein resides in the desmosome. It localises to the tight junction. The protein localises to the secreted. Functionally, junctional adhesion protein that mediates heterotypic cell-cell interactions with its cognate receptor JAM2 to regulate different cellular processes. Plays a role in homing and mobilization of hematopoietic stem and progenitor cells within the bone marrow. At the surface of bone marrow stromal cells, it contributes to the retention of the hematopoietic stem and progenitor cells expressing JAM3. Plays a central role in leukocytes extravasation by facilitating transmigration through the endothelium. Plays a role in spermatogenesis where JAM2 and JAM3, which are respectively expressed by Sertoli and germ cells, mediate an interaction between both cell types and play an essential role in the anchorage of germ cells onto Sertoli cells and the assembly of cell polarity complexes during spermatid differentiation. Also functions as a counter-receptor for ITGAM, mediating leukocyte-platelet interactions and is involved in the regulation of transepithelial migration of polymorphonuclear neutrophils (PMN). Plays a role in angiogenesis. Plays a role in the regulation of cell migration. During myogenesis, it is involved in myocyte fusion. Its function is as follows. Promotes chemotaxis of vascular endothelial cells and stimulates angiogenesis. This chain is Junctional adhesion molecule C (JAM3), found in Homo sapiens (Human).